Here is a 468-residue protein sequence, read N- to C-terminus: Glucose-dependent insulinotropic receptor (468 aa).

Residues 1 to 6 (MESSFS) are Extracellular-facing. A helical membrane pass occupies residues 7–27 (FGVILAVLTILIIAVNALVVV). Topologically, residues 28–37 (AMLLSIYKND) are cytoplasmic. A helical membrane pass occupies residues 38–58 (GVGLCFTLNLAVADTLIGVAI). Residues 59–81 (SGLVTDQLSSSAQHTQKTLCSLR) are Extracellular-facing. A helical transmembrane segment spans residues 82-102 (MAFVTSSAAASVLTVMLIAFD). Over 103–125 (RYLAIKQPLRYFQIMNGLVAGGC) the chain is Cytoplasmic. A helical membrane pass occupies residues 126 to 146 (IAGLWLISYLIGFLPLGVSIF). Over 147-164 (QQTTYHGPCTFFAVFHPR) the chain is Extracellular. Residues 165–185 (FVLTLSCAGFFPAVLLFVFFY) traverse the membrane as a helical segment. Over 186 to 226 (CDMLKIASVHSQHIRKMEHAGAMVGACRPPRPVNDFKAVRT) the chain is Cytoplasmic. The chain crosses the membrane as a helical span at residues 227 to 247 (VSVLIGSFTLSWSPFLITSIV). Over 248-262 (QVACHKCCLYQVLEK) the chain is Extracellular. Residues 263–283 (YLWLLGVGNSLLNPLIYAYWQ) form a helical membrane-spanning segment. Over 284–468 (REVRQQLCHM…MSDPLRTCRG (185 aa)) the chain is Cytoplasmic.

It belongs to the G-protein coupled receptor 1 family. Expression restricted to the beta-cells of pancreatic islets.

It is found in the cell membrane. In terms of biological role, receptor for the endogenous fatty-acid ethanolamide oleoylethanolamide (OEA) and lysophosphatidylcholine (LPC). Functions as a glucose-dependent insulinotropic receptor. The activity of this receptor is mediated by G proteins which activate adenylate cyclase. Seems to act through a G(s) mediated pathway. The chain is Glucose-dependent insulinotropic receptor (Gpr119) from Rattus norvegicus (Rat).